A 1395-amino-acid polypeptide reads, in one-letter code: MRDLLKIHKLEQKEQDFDAIRVGLASPEKIRSWSYGEVKKPETINYRTFRPEREGLFCAKIFGPMKDFECLCSKYKRMKFRNVVCEKCGVEVTHSKVRRERMGHIELAAPVAHIWYLKSLPSRLGLLMDMTLKDIERVLYFEAFLVTDPGSTSLVHKQLLTEEMYFDALDEYGDDEFEAKMGAEAIQDVLSDMKLEVEAANLRENSLNTKSQTKLKKYNKRLKLVNSLIQSGNKPEWMVLKVLPVLPPDLRPLVPLDGGRFATSDLNDLYRRVINRNNRLARLLELDAPEIIVRNEKRMLQEAVDSLIDNGRRGRSVMGNNRRPLKSISDMIKGKQGRFRQNLLGKRVDYSGRSVIVCGPYLKLHQCGLPKKMALELFKPFIYNRLQVKGLASTIKVAKKMVESESPEVWDVLERVVHQHPVLLNRAPTLHRLGIQAFEPLLIEGKAIQLHPLVCGAFNADFDGDQMAVHVPLSEEAQLEARTLMLASNNVLHLASGEPIIVPSQDVILGLYYMTREMINQKGEGLIFANATEALNAYESGNVTLHAKVKLRIQDYQKIDGKFESSTKRIVDTTVGRAIFSRILPNGLSFDLINEAISKKVVSDLIHVCYRTQELKQTVVFADQMMYMGFQYSTKSGISFCSNDMIIPDSKAKMIEQAKTQVKDIQEQFSKGVVTDGERYNKVIDIWSRTSEKVAKAMMDEIGFEDFIDADGKTQKLASFNSVYMMADSGARGSSAQMRQLSGMRGLMAKPDGSIIETPITSNFREGLNNMQYFISTHGARKGLADTALKTANSGYLTRRLVDVGQDLVITEDDCGTDNGLIMKAVIDGGNIVQTLGVVTLGRVTAEDILMPDSTEVFLEKGHLVSLDDSDKINELGIESIKVRSAITCDTRYGVCSSCYGNDMARGHKIGVGEAIGVIAAQSIGEPGTQLTMRTFHIGGAASASTTISSVNVNTDGVAHFENLKSITNENNNLVVISRSSEVTIRNNKGQEVERYKIPYGAIVHVQEGGKVKAKDKIVDWDPHTHPIISEQAGRVIFVDFVEGVTVNKNTDPLTGLTFFEMIDEAERSTAAKGLKPLIKMVEESDSEVVLSTHYLPSTVKINLDDNQVIVAGEVLAKIPKDLSKTSDITGGLPRVADLFEARKAKDHSILVEATGVISFGSSTKSKDRLIITNSEGEAIEMMIHKWRQINVFDGETIEKGDVISDGPSNPHDILRLLGVEALANYVVREVQNVYRLQGVNISDKHIEVIVKQMLRKVEVLDAGDSSFVNGETTEYVRVIETNKQLEVQGKELIIYQRLLMGITKASLATESFISAASFQETTRVLTEASTTGRVDTLQGLKENVIVGRLIPAGTGFKHHQKRRAQYVASITQTIDAQQALADQLNEAEEQAQEG.

Zn(2+)-binding residues include C70, C72, C85, and C88. Residues D461, D463, and D465 each contribute to the Mg(2+) site. Zn(2+)-binding residues include C815, C889, C896, and C899.

Belongs to the RNA polymerase beta' chain family. As to quaternary structure, the RNAP catalytic core consists of 2 alpha, 1 beta, 1 beta' and 1 omega subunit. When a sigma factor is associated with the core the holoenzyme is formed, which can initiate transcription. Mg(2+) is required as a cofactor. The cofactor is Zn(2+).

The enzyme catalyses RNA(n) + a ribonucleoside 5'-triphosphate = RNA(n+1) + diphosphate. DNA-dependent RNA polymerase catalyzes the transcription of DNA into RNA using the four ribonucleoside triphosphates as substrates. The chain is DNA-directed RNA polymerase subunit beta' from Ruthia magnifica subsp. Calyptogena magnifica.